A 374-amino-acid chain; its full sequence is Chaperone protein DnaJ (374 aa).

Residues 5–70 (DYYEVLGVER…NKRAAYDQYG (66 aa)) form the J domain. The CR-type zinc finger occupies 133–211 (GTSVNIRVPT…CHGEGRVEEY (79 aa)). Positions 146, 149, 163, 166, 185, 188, 199, and 202 each coordinate Zn(2+). CXXCXGXG motif repeat units follow at residues 146 to 153 (CKPCDGSG), 163 to 170 (CPTCGGIG), 185 to 192 (CPRCHGQG), and 199 to 206 (CDSCHGEG).

Belongs to the DnaJ family. As to quaternary structure, homodimer. Zn(2+) serves as cofactor.

The protein localises to the cytoplasm. Its function is as follows. Participates actively in the response to hyperosmotic and heat shock by preventing the aggregation of stress-denatured proteins and by disaggregating proteins, also in an autonomous, DnaK-independent fashion. Unfolded proteins bind initially to DnaJ; upon interaction with the DnaJ-bound protein, DnaK hydrolyzes its bound ATP, resulting in the formation of a stable complex. GrpE releases ADP from DnaK; ATP binding to DnaK triggers the release of the substrate protein, thus completing the reaction cycle. Several rounds of ATP-dependent interactions between DnaJ, DnaK and GrpE are required for fully efficient folding. Also involved, together with DnaK and GrpE, in the DNA replication of plasmids through activation of initiation proteins. The chain is Chaperone protein DnaJ from Pseudomonas fluorescens (strain SBW25).